The chain runs to 747 residues: Tegument protein UL46 homolog (747 aa).

4 disordered regions span residues 437-484, 525-593, 611-665, and 689-747; these read FCCP…SPRT, QRSD…DYMR, TPYM…PEVV, and SASR…VSSL. A compositionally biased stretch (polar residues) spans 465–484; sequence LRSSRQLPTSPPSNIVSPRT. The span at 528–540 shows a compositional bias: low complexity; sequence DSSSSDNSTCSST. The span at 541-553 shows a compositional bias: polar residues; it reads ETQYITLPSTPSP. 2 stretches are compositionally biased toward basic and acidic residues: residues 707–724 and 736–747; these read VCRE…DGFI and KHPDQTERVSSL.

This sequence belongs to the herpesviridae HHV-1 VP11/12 protein family.

The protein resides in the virion tegument. It localises to the host cell membrane. Modulates alpha trans-inducing factor-dependent activation of alpha genes. This Equine herpesvirus 1 (strain Ab4p) (EHV-1) protein is Tegument protein UL46 homolog.